The following is a 360-amino-acid chain: MSQGHGKYDFYIGLGLAMSSSIFIGGSFILKKKGLLRLARKGSTRAGQGGHAYLKEWLWWAGLLSMGAGEVANFAAYAFAPATLVTPLGALSVLVSAILSSYFLNERLNLHGKIGCLLSILGSTVMVIHAPKEEEIETLNEMSHKLGDPGFVVFATLVVIVSLILIFVVGPRHGQTNILVYITICSVIGAVSVSCAKGLGIAIKELFAGKPVLQHPLTWILLLSLIVCVSTQINYLNRALDIFNTSIVTPIYYVFFTTSVITCSAILFKEWQDMPVDDVIGTLSGFFTIIVGIFLLHAFKDVSFSLSSLPVSFRKDEKAVNGSLSSMYEVLNNNEESLTCGIEQHTAENISRRNGNLTAF.

Topologically, residues 1-9 (MSQGHGKYD) are extracellular. A helical membrane pass occupies residues 10-30 (FYIGLGLAMSSSIFIGGSFIL). Topologically, residues 31 to 56 (KKKGLLRLARKGSTRAGQGGHAYLKE) are cytoplasmic. A helical transmembrane segment spans residues 57 to 77 (WLWWAGLLSMGAGEVANFAAY). Alanine 78 is a topological domain (extracellular). Residues 79-99 (FAPATLVTPLGALSVLVSAIL) traverse the membrane as a helical segment. Residues 100-107 (SSYFLNER) are Cytoplasmic-facing. Residues 108 to 128 (LNLHGKIGCLLSILGSTVMVI) form a helical membrane-spanning segment. The Extracellular portion of the chain corresponds to 129-149 (HAPKEEEIETLNEMSHKLGDP). Residues 150-170 (GFVVFATLVVIVSLILIFVVG) form a helical membrane-spanning segment. At 171–175 (PRHGQ) the chain is on the cytoplasmic side. Residues 176-196 (TNILVYITICSVIGAVSVSCA) form a helical membrane-spanning segment. Residues 197-215 (KGLGIAIKELFAGKPVLQH) lie on the Extracellular side of the membrane. Residues 216–236 (PLTWILLLSLIVCVSTQINYL) form a helical membrane-spanning segment. At 237–246 (NRALDIFNTS) the chain is on the cytoplasmic side. Residues 247–267 (IVTPIYYVFFTTSVITCSAIL) form a helical membrane-spanning segment. Residues 268-278 (FKEWQDMPVDD) are Extracellular-facing. A helical membrane pass occupies residues 279–299 (VIGTLSGFFTIIVGIFLLHAF). Topologically, residues 300 to 360 (KDVSFSLSSL…SRRNGNLTAF (61 aa)) are cytoplasmic.

Belongs to the NIPA family.

The protein localises to the cell membrane. The protein resides in the early endosome. The catalysed reaction is Mg(2+)(in) = Mg(2+)(out). In terms of biological role, acts as a selective Mg(2+) transporter. The polypeptide is Magnesium transporter NIPA2 (NIPA2) (Bos taurus (Bovine)).